We begin with the raw amino-acid sequence, 504 residues long: Protein Dok-7 (504 aa).

Positions 4 to 109 constitute a PH domain; that stretch reads AALVEGQVKL…WDTRIRYALG (106 aa). One can recognise an IRS-type PTB domain in the interval 105–210; sequence RYALGEVHRF…RGISPTKGPF (106 aa). Disordered regions lie at residues 210–232, 248–348, and 371–483; these read FGLRPVLPDPSSGGPSASEERVA, LSHS…HSSY, and SLLS…PHAG. The segment covering 263–280 has biased composition (low complexity); it reads LSSSSSEASHSDISASSR. Composition is skewed to polar residues over residues 285-297, 331-341, and 421-430; these read PEQSSSSAGTSQE, GRQSSSDSGIA, and PASQGSSDHG.

As to quaternary structure, homodimer. Forms a heterotetramer composed of 2 DOK7 and 2 MUSK molecules which facilitates MUSK trans-autophosphorylation on tyrosine residue and activation. Interacts (via IRS-type PTB domain) with MUSK (via cytoplasmic part); requires MUSK phosphorylation.

Its subcellular location is the cell membrane. The protein resides in the synapse. Probable muscle-intrinsic activator of MUSK that plays an essential role in neuromuscular synaptogenesis. Acts in aneural activation of MUSK and subsequent acetylcholine receptor (AchR) clustering in myotubes. Induces autophosphorylation of MUSK. This is Protein Dok-7 (Dok7) from Mus musculus (Mouse).